The sequence spans 418 residues: Serine hydroxymethyltransferase (418 aa).

Residues leucine 121 and 125–127 (GHL) contribute to the (6S)-5,6,7,8-tetrahydrofolate site. The residue at position 230 (lysine 230) is an N6-(pyridoxal phosphate)lysine. Residue 356 to 358 (SPF) participates in (6S)-5,6,7,8-tetrahydrofolate binding.

This sequence belongs to the SHMT family. As to quaternary structure, homodimer. Pyridoxal 5'-phosphate is required as a cofactor.

It localises to the cytoplasm. The catalysed reaction is (6R)-5,10-methylene-5,6,7,8-tetrahydrofolate + glycine + H2O = (6S)-5,6,7,8-tetrahydrofolate + L-serine. The protein operates within one-carbon metabolism; tetrahydrofolate interconversion. It participates in amino-acid biosynthesis; glycine biosynthesis; glycine from L-serine: step 1/1. Catalyzes the reversible interconversion of serine and glycine with tetrahydrofolate (THF) serving as the one-carbon carrier. This reaction serves as the major source of one-carbon groups required for the biosynthesis of purines, thymidylate, methionine, and other important biomolecules. Also exhibits THF-independent aldolase activity toward beta-hydroxyamino acids, producing glycine and aldehydes, via a retro-aldol mechanism. This chain is Serine hydroxymethyltransferase, found in Shewanella woodyi (strain ATCC 51908 / MS32).